The chain runs to 458 residues: tRNA modification GTPase MnmE (458 aa).

Arg-26, Glu-88, and Arg-127 together coordinate (6S)-5-formyl-5,6,7,8-tetrahydrofolate. Residues 224-378 enclose the TrmE-type G domain; the sequence is GLSTAIIGRP…IEDRINQLFF (155 aa). Asn-234 is a binding site for K(+). GTP contacts are provided by residues 234–239, 253–259, and 278–281; these read NVGKSS, TDIAGTT, and DTAG. Residue Ser-238 coordinates Mg(2+). K(+) is bound by residues Thr-253, Ile-255, and Thr-258. Position 259 (Thr-259) interacts with Mg(2+). Position 458 (Lys-458) interacts with (6S)-5-formyl-5,6,7,8-tetrahydrofolate.

The protein belongs to the TRAFAC class TrmE-Era-EngA-EngB-Septin-like GTPase superfamily. TrmE GTPase family. Homodimer. Heterotetramer of two MnmE and two MnmG subunits. K(+) is required as a cofactor.

The protein resides in the cytoplasm. Exhibits a very high intrinsic GTPase hydrolysis rate. Involved in the addition of a carboxymethylaminomethyl (cmnm) group at the wobble position (U34) of certain tRNAs, forming tRNA-cmnm(5)s(2)U34. This is tRNA modification GTPase MnmE from Streptococcus pyogenes serotype M3 (strain ATCC BAA-595 / MGAS315).